We begin with the raw amino-acid sequence, 735 residues long: Trafficking protein particle complex subunit 12 (735 aa).

Disordered regions lie at residues 1–204 and 237–276; these read MEDA…QPSP and NPGA…PPAS. The segment covering 13-22 has biased composition (pro residues); that stretch reads PEAPHPPQLA. Residues 34 to 50 are compositionally biased toward acidic residues; it reads ETIDLGGDEFGSEENET. Phosphoserine occurs at positions 109 and 184. TPR repeat units follow at residues 545–578, 580–613, 620–653, and 654–687; these read GRVM…YPEQ, PQLL…TQKL, IMVL…DPRN, and AVAN…DPRH.

Component of the multisubunit TRAPP (transport protein particle) complex, which includes at least TRAPPC2, TRAPPC2L, TRAPPC3, TRAPPC3L, TRAPPC4, TRAPPC5, TRAPPC8, TRAPPC9, TRAPPC10, TRAPPC11 and TRAPPC12. Interacts with CENPE. Phosphorylated as the cells enter mitosis but is dephosphorylated at or before the onset of anaphase. The phosphorylated form recruits CENPE to kinetochores more efficiently than the non-phosphorylated form.

Its subcellular location is the endoplasmic reticulum-Golgi intermediate compartment. It localises to the nucleus. Its function is as follows. Component of the TRAPP complex, which is involved in endoplasmic reticulum to Golgi apparatus trafficking at a very early stage. Also plays a role in chromosome congression, kinetochore assembly and stability and controls the recruitment of CENPE to the kinetochores. The protein is Trafficking protein particle complex subunit 12 of Homo sapiens (Human).